Here is a 573-residue protein sequence, read N- to C-terminus: MSDVTQQKKRKRSKGEVNPSKPTVDEEITDPSSNEDEQLEVSDEEDALESEEEFEGENPADKRRRLAKQYLENLKSEANDILTDNRNAEEKDLNNLKERTIDEYNNFDAGDLDKDIIASRLKEDVAEQQGRVFRYFGDKLLISEAKQSFTRVGENNLTCISCFQPVLNKYTFEESSNGDKNKGRLFAYTVSKDLQLTKYDITDFSKRPKKLKYAKGGAKYIPTSKHEYENTTEGHYDEILTVAASPDGKYVVTGGRDRKLIVWSTESLSPVKVIPTKDRRGEVLSLAFRKNSDQLYASCADFKIRTYSINQFSQLEILYGHHDIVEDISALAMERCVTVGARDRTAMLWKIPDETRLTFRGGDEPQKLLRRWMKENAKEGEDGEVKYPDESEAPLFFCEGSIDVVSMVDDFHFITGSDNGNICLWSLAKKKPIFTERIAHGILPEPSFNDISGETDEELRKRQLQGKKLLQPFWITSLYAIPYSNVFISGSWSGSLKVWKISDNLRSFELLGELSGAKGVVTKIQVVESGKHGKEKFRILASIAKEHRLGRWIANVSGARNGIYSAVIDQTGF.

A disordered region spans residues Met1–Arg63. N-acetylserine is present on Ser2. Over residues Asp25–Asn58 the composition is skewed to acidic residues. Residues Ser32–Asn106 are a coiled coil. Residue Ser50 is modified to Phosphoserine. WD repeat units follow at residues Gly234–Val273, Asp278–Ile317, Gly320–Phe359, Phe397–Thr435, Gln471–Glu509, and Gly516–Gly562.

Belongs to the WD repeat RRP9 family. In terms of assembly, interacts with UTP25. Component of the ribosomal small subunit (SSU) processome composed of at least 40 protein subunits and snoRNA U3.

The protein resides in the nucleus. It is found in the nucleolus. Involved in nucleolar processing of pre-18S ribosomal RNA. Required for efficient pre-rRNA cleavage at sites A0, A1 and A2, and biosynthesis of 18S rRNA. This Saccharomyces cerevisiae (strain ATCC 204508 / S288c) (Baker's yeast) protein is Ribosomal RNA-processing protein 9 (RRP9).